The primary structure comprises 336 residues: DNA polymerase beta (336 aa).

3 residues coordinate K(+): Lys59, Leu61, and Val64. Na(+) contacts are provided by Lys59, Leu61, and Val64. Lys71 serves as the catalytic Nucleophile; Schiff-base intermediate with DNA; for 5'-dRP lyase activity. Omega-N-methylarginine; by PRMT6 is present on Arg82. K(+) is bound by residues Thr100, Val102, and Ile105. Residues Thr100, Val102, and Ile105 each coordinate Na(+). An a 2'-deoxyribonucleoside 5'-triphosphate-binding site is contributed by Arg148. Residue Arg151 is modified to Omega-N-methylarginine; by PRMT6. A 2'-deoxyribonucleoside 5'-triphosphate-binding residues include Ser179, Arg182, Gly188, and Asp189. A DNA-binding region spans residues 182–191 (RGAESSGDID). Asp189, Asp191, and Asp257 together coordinate Mg(2+).

The protein belongs to the DNA polymerase type-X family. Mg(2+) serves as cofactor. Methylation by PRMT6 stimulates the polymerase activity by enhancing DNA binding and processivity. Post-translationally, ubiquitinated: monoubiquitinated by huwe1/arf-bp1. Monoubiquitinated protein is then the target of stub1/chip, which catalyzes polyubiquitination from monoubiquitin, leading to degradation by the proteasome. usp47 mediates the deubiquitination of monoubiquitinated protein, preventing polyubiquitination by STUB1/CHIP and its subsequent degradation.

The protein localises to the nucleus. The protein resides in the cytoplasm. It catalyses the reaction DNA(n) + a 2'-deoxyribonucleoside 5'-triphosphate = DNA(n+1) + diphosphate. It carries out the reaction a 5'-end 2'-deoxyribose-2'-deoxyribonucleotide-DNA = (2E,4S)-4-hydroxypenten-2-al-5-phosphate + a 5'-end 5'-phospho-2'-deoxyribonucleoside-DNA + H(+). The catalysed reaction is 2'-deoxyribonucleotide-(2'-deoxyribose 5'-phosphate)-2'-deoxyribonucleotide-DNA = a 3'-end 2'-deoxyribonucleotide-(2,3-dehydro-2,3-deoxyribose 5'-phosphate)-DNA + a 5'-end 5'-phospho-2'-deoxyribonucleoside-DNA + H(+). Its function is as follows. Repair polymerase that plays a key role in base-excision repair. During this process, the damaged base is excised by specific DNA glycosylases, the DNA backbone is nicked at the abasic site by an apurinic/apyrimidic (AP) endonuclease, and POLB removes 5'-deoxyribose-phosphate from the preincised AP site acting as a 5'-deoxyribose-phosphate lyase (5'-dRP lyase); through its DNA polymerase activity, it adds one nucleotide to the 3' end of the arising single-nucleotide gap. Conducts 'gap-filling' DNA synthesis in a stepwise distributive fashion rather than in a processive fashion as for other DNA polymerases. It is also able to cleave sugar-phosphate bonds 3' to an intact AP site, acting as an AP lyase. This Danio rerio (Zebrafish) protein is DNA polymerase beta (polb).